The following is a 335-amino-acid chain: Acetyl-coenzyme A carboxylase carboxyl transferase subunit alpha (335 aa).

One can recognise a CoA carboxyltransferase C-terminal domain in the interval 48-308; sequence TLEKKVDALR…KGMLIEELKA (261 aa).

It belongs to the AccA family. Acetyl-CoA carboxylase is a heterohexamer composed of biotin carboxyl carrier protein (AccB), biotin carboxylase (AccC) and two subunits each of ACCase subunit alpha (AccA) and ACCase subunit beta (AccD).

The protein localises to the cytoplasm. It carries out the reaction N(6)-carboxybiotinyl-L-lysyl-[protein] + acetyl-CoA = N(6)-biotinyl-L-lysyl-[protein] + malonyl-CoA. It participates in lipid metabolism; malonyl-CoA biosynthesis; malonyl-CoA from acetyl-CoA: step 1/1. Its function is as follows. Component of the acetyl coenzyme A carboxylase (ACC) complex. First, biotin carboxylase catalyzes the carboxylation of biotin on its carrier protein (BCCP) and then the CO(2) group is transferred by the carboxyltransferase to acetyl-CoA to form malonyl-CoA. The protein is Acetyl-coenzyme A carboxylase carboxyl transferase subunit alpha of Chlorobium luteolum (strain DSM 273 / BCRC 81028 / 2530) (Pelodictyon luteolum).